The sequence spans 253 residues: uncharacterized protein (253 aa).

Positions 1–25 (MRKKKFLSKVSFGSLFLLCGTVLSA) are cleaved as a signal peptide. Residue C26 is the site of N-palmitoyl cysteine attachment. A lipid anchor (S-diacylglycerol cysteine) is attached at C26.

The protein belongs to the MG439/MG440 family.

It localises to the cell membrane. This is an uncharacterized protein from Mycoplasma pneumoniae (strain ATCC 29342 / M129 / Subtype 1) (Mycoplasmoides pneumoniae).